Here is a 453-residue protein sequence, read N- to C-terminus: Chromosomal replication initiator protein DnaA (453 aa).

The interval 1–73 is domain I, interacts with DnaA modulators; it reads MSKEEIWDKV…ADLIEKAIGT (73 aa). The segment at 73–114 is domain II; sequence TKLMPNFVIQEDLTEDKQVKDSAKAKSEAKPDVQAPQNSSED. Positions 91 to 103 are enriched in basic and acidic residues; sequence VKDSAKAKSEAKP. Residues 91-113 are disordered; it reads VKDSAKAKSEAKPDVQAPQNSSE. A domain III, AAA+ region region spans residues 115-331; that stretch reads QFNVHNTFET…GALTRVIAYS (217 aa). ATP-binding residues include glycine 159, glycine 161, lysine 162, and threonine 163. The interval 332–453 is domain IV, binds dsDNA; that stretch reads RLQNEAITTE…ENLEKEIRNQ (122 aa).

It belongs to the DnaA family. In terms of assembly, oligomerizes as a right-handed, spiral filament on DNA at oriC.

The protein localises to the cytoplasm. Plays an essential role in the initiation and regulation of chromosomal replication. ATP-DnaA binds to the origin of replication (oriC) to initiate formation of the DNA replication initiation complex once per cell cycle. Binds the DnaA box (a 9 base pair repeat at the origin) and separates the double-stranded (ds)DNA. Forms a right-handed helical filament on oriC DNA; dsDNA binds to the exterior of the filament while single-stranded (ss)DNA is stabiized in the filament's interior. The ATP-DnaA-oriC complex binds and stabilizes one strand of the AT-rich DNA unwinding element (DUE), permitting loading of DNA polymerase. After initiation quickly degrades to an ADP-DnaA complex that is not apt for DNA replication. Binds acidic phospholipids. This is Chromosomal replication initiator protein DnaA from Staphylococcus carnosus (strain TM300).